A 183-amino-acid polypeptide reads, in one-letter code: Auxin-responsive protein IAA20 (183 aa).

Disordered stretches follow at residues 1–23 (MELELGLRLALPSPSPSPATATA) and 42–77 (GFEEALGGFKTDDDNDDGNGRGGDGDSDGEMGNKRR). The EAR-like (transcriptional repression) motif lies at 3–7 (LELGL). The PB1 domain occupies 98 to 183 (GGYVKVKMEG…KSVKRLKILV (86 aa)).

Belongs to the Aux/IAA family. Homodimers and heterodimers. As to expression, expressed at very low levels in etiolated seedlings and flowers.

Its subcellular location is the nucleus. Functionally, aux/IAA proteins are short-lived transcriptional factors that function as repressors of early auxin response genes at low auxin concentrations. This Oryza sativa subsp. japonica (Rice) protein is Auxin-responsive protein IAA20 (IAA20).